The sequence spans 450 residues: Tubulin alpha chain (450 aa).

Glutamine 11 contributes to the GTP binding site. Lysine 40 is modified (N6-acetyllysine). GTP is bound by residues glutamate 71, serine 140, glycine 144, threonine 145, threonine 179, asparagine 206, and asparagine 228. Residue glutamate 71 participates in Mg(2+) binding. Residue glutamate 254 is part of the active site.

Belongs to the tubulin family. As to quaternary structure, dimer of alpha and beta chains. A typical microtubule is a hollow water-filled tube with an outer diameter of 25 nm and an inner diameter of 15 nM. Alpha-beta heterodimers associate head-to-tail to form protofilaments running lengthwise along the microtubule wall with the beta-tubulin subunit facing the microtubule plus end conferring a structural polarity. Microtubules usually have 13 protofilaments but different protofilament numbers can be found in some organisms and specialized cells. The cofactor is Mg(2+). In terms of processing, acetylation of alpha chains at Lys-40 stabilizes microtubules and affects affinity and processivity of microtubule motors. This modification has a role in multiple cellular functions, ranging from cell motility, cell cycle progression or cell differentiation to intracellular trafficking and signaling.

The protein localises to the cytoplasm. Its subcellular location is the cytoskeleton. The enzyme catalyses GTP + H2O = GDP + phosphate + H(+). In terms of biological role, tubulin is the major constituent of microtubules, a cylinder consisting of laterally associated linear protofilaments composed of alpha- and beta-tubulin heterodimers. Microtubules grow by the addition of GTP-tubulin dimers to the microtubule end, where a stabilizing cap forms. Below the cap, tubulin dimers are in GDP-bound state, owing to GTPase activity of alpha-tubulin. This chain is Tubulin alpha chain, found in Oxytricha granulifera (Ciliate).